The chain runs to 1079 residues: MLRPRTYVRKLAWRCPRKSQLGLRLATSVSSHKSLPLPMNFDISHSQSAFRAYQDIIHRNKSVGDDEPSQRSENENNPSESDKDSNQDPETPKKDKESENDKEPEKEKDIENDNKVSSESNENVTLASSNTGGAAPPNGNNNGDDPDDSNPSLPVDPVTGLYPPLLAIPMKDRPPLPGRPFAINVTDPEVIRSIYTIIDKREPYFVLFHVKDSNEPDTDVINKKDSVYDIGVHCQIIRHTTPRPGVFNVLGYPLERCKLEELTTPSSEKEAKSEEPSKEDAESFPTSYLKGLNVSYATVKPVEDEPYDKSSAEIRSLVESLKTLLSKMGGKNPLEKLQIKEGTDLISDPSKFADFVGSTIHGDPKKIQEILETLNIETRLSRALELLKVELKASLIKESTIHNLSTKADEYQTRLFIKEFIKELQKRAGISESEDKKTSKFDERLKHLKLTEEAMEAYNAEKAKMENQNEHSSELGVSERYLDWLTSIPWGVYSKDHFNIKQAREVLERDHYGLKDVKDRILEFISLGKVSGKVDGKILCLAGPPGTGKTSIAKSIAESLNRKYVRIAMGGIQDVHEVKGHRRTYVGSIPGRIISALKQAKTSNPLMLIDEIDKLDLSRGGGAASAFLEILDPEQNNSFVDNYIDVKVDLSKVLFVCTANYLGNIPAPLRDRMEIIDVSGYTNNEKIEIAKRHLIPEASKKAGLETNHVSITNETISRLIEKYCRESGLRNVKKLITRIFSKASLKIVEEIEAKEALDSSKEKEGVTASSEEANVNSESTKSNTSQAEPVAESSTDISTKSKVASEKIETKEKKETNKENGQSEEDQQPEPKFVIPEDIKLEITPANLKDYVGPEIYTRDRVYEFPPPGVATGLSYSTSGNGDALYIESILTHSIGSGSGVPGMHVTGSLKDVMKESASIAYSFTKSFMAKNYPDNRFFEAADIHVHCPDGAIPKDGPSAGISFTSSLVSLAINESLPPTVAMTGEITVTGRVLPVGGLREKILGAKRYGCDTIIFPKDIENELEEIPDEVKDGVTFIPVEWYQEVFDKIFPNATAQKCNEVWKEEFAKLDSKKKNKKK.

The transit peptide at 1–60 directs the protein to the mitochondrion; it reads MLRPRTYVRKLAWRCPRKSQLGLRLATSVSSHKSLPLPMNFDISHSQSAFRAYQDIIHRN. Over residues 61–116 the composition is skewed to basic and acidic residues; sequence KSVGDDEPSQRSENENNPSESDKDSNQDPETPKKDKESENDKEPEKEKDIENDNKV. Disordered regions lie at residues 61-158 and 262-285; these read KSVG…VDPV and LTTP…ESFP. Residues 117–131 are compositionally biased toward polar residues; that stretch reads SSESNENVTLASSNT. Residues 132–143 show a composition bias toward low complexity; sequence GGAAPPNGNNNG. In terms of domain architecture, Lon N-terminal spans 165–391; it reads LLAIPMKDRP…RALELLKVEL (227 aa). Residues 262-281 are compositionally biased toward basic and acidic residues; sequence LTTPSSEKEAKSEEPSKEDA. 543-550 contributes to the ATP binding site; that stretch reads GPPGTGKT. Residues 756–765 show a composition bias toward basic and acidic residues; it reads ALDSSKEKEG. A disordered region spans residues 756 to 832; the sequence is ALDSSKEKEG…SEEDQQPEPK (77 aa). Positions 768 to 779 are enriched in low complexity; that stretch reads ASSEEANVNSES. The segment covering 780-802 has biased composition (polar residues); that stretch reads TKSNTSQAEPVAESSTDISTKSK. The segment covering 803–818 has biased composition (basic and acidic residues); that stretch reads VASEKIETKEKKETNK. The Lon proteolytic domain occupies 865-1053; that stretch reads FPPPGVATGL…QEVFDKIFPN (189 aa). Catalysis depends on residues Ser-959 and Lys-1002.

Belongs to the peptidase S16 family. As to quaternary structure, homohexamer or homoheptamer. Organized in a ring with a central cavity.

The protein localises to the mitochondrion matrix. It carries out the reaction Hydrolysis of proteins in presence of ATP.. Functionally, ATP-dependent serine protease that mediates the selective degradation of misfolded, unassembled or oxidatively damaged polypeptides as well as certain short-lived regulatory proteins in the mitochondrial matrix. May also have a chaperone function in the assembly of inner membrane protein complexes. Participates in the regulation of mitochondrial gene expression and in the maintenance of the integrity of the mitochondrial genome. Binds to mitochondrial DNA in a site-specific manner. In Debaryomyces hansenii (strain ATCC 36239 / CBS 767 / BCRC 21394 / JCM 1990 / NBRC 0083 / IGC 2968) (Yeast), this protein is Lon protease homolog, mitochondrial.